A 1097-amino-acid chain; its full sequence is FHIP family protein GK23746 (1097 aa).

Polar residues predominate over residues 1–21 (MSWLRSSPLRQSLTRTTSSGN). A disordered region spans residues 1–25 (MSWLRSSPLRQSLTRTTSSGNGIRP). The residue at position 491 (serine 491) is a Phosphoserine. Disordered regions lie at residues 639-684 (DVSA…SGRR), 820-856 (NENSPLHQQQSLQHPHHLQPLPAPQQTGAGAQQRSAY), and 932-1042 (NNQQ…SEPV). Residues 641-654 (SASSGNGTGSVVVG) are compositionally biased toward low complexity. At serine 823 the chain carries Phosphoserine. 2 stretches are compositionally biased toward low complexity: residues 824-852 (PLHQQQSLQHPHHLQPLPAPQQTGAGAQQ) and 932-948 (NNQQSSNQTHLNSSSSS). Residues 949 to 962 (AVTTCETSLSTQPH) are compositionally biased toward polar residues. The span at 973–985 (TTSSTISTSSGTT) shows a compositional bias: low complexity. Over residues 986–995 (AGSGGGGGSG) the composition is skewed to gly residues. Low complexity-rich tracts occupy residues 996 to 1006 (SNSSFSIGGST) and 1013 to 1022 (SNNTTNSSST).

The protein belongs to the FHIP family.

The protein is FHIP family protein GK23746 of Drosophila willistoni (Fruit fly).